We begin with the raw amino-acid sequence, 322 residues long: 4-hydroxy-3-methylbut-2-enyl diphosphate reductase (322 aa).

Cys15 lines the [4Fe-4S] cluster pocket. Residues His44 and His77 each coordinate (2E)-4-hydroxy-3-methylbut-2-enyl diphosphate. Positions 44 and 77 each coordinate dimethylallyl diphosphate. Residues His44 and His77 each coordinate isopentenyl diphosphate. Cys99 contacts [4Fe-4S] cluster. His127 is a (2E)-4-hydroxy-3-methylbut-2-enyl diphosphate binding site. Residue His127 coordinates dimethylallyl diphosphate. His127 provides a ligand contact to isopentenyl diphosphate. The active-site Proton donor is the Glu129. Thr168 contacts (2E)-4-hydroxy-3-methylbut-2-enyl diphosphate. Cys198 contributes to the [4Fe-4S] cluster binding site. 4 residues coordinate (2E)-4-hydroxy-3-methylbut-2-enyl diphosphate: Ser226, Ser227, Asn228, and Ser270. The dimethylallyl diphosphate site is built by Ser226, Ser227, Asn228, and Ser270. Ser226, Ser227, Asn228, and Ser270 together coordinate isopentenyl diphosphate.

The protein belongs to the IspH family. Requires [4Fe-4S] cluster as cofactor.

It carries out the reaction isopentenyl diphosphate + 2 oxidized [2Fe-2S]-[ferredoxin] + H2O = (2E)-4-hydroxy-3-methylbut-2-enyl diphosphate + 2 reduced [2Fe-2S]-[ferredoxin] + 2 H(+). It catalyses the reaction dimethylallyl diphosphate + 2 oxidized [2Fe-2S]-[ferredoxin] + H2O = (2E)-4-hydroxy-3-methylbut-2-enyl diphosphate + 2 reduced [2Fe-2S]-[ferredoxin] + 2 H(+). It participates in isoprenoid biosynthesis; dimethylallyl diphosphate biosynthesis; dimethylallyl diphosphate from (2E)-4-hydroxy-3-methylbutenyl diphosphate: step 1/1. It functions in the pathway isoprenoid biosynthesis; isopentenyl diphosphate biosynthesis via DXP pathway; isopentenyl diphosphate from 1-deoxy-D-xylulose 5-phosphate: step 6/6. Functionally, catalyzes the conversion of 1-hydroxy-2-methyl-2-(E)-butenyl 4-diphosphate (HMBPP) into a mixture of isopentenyl diphosphate (IPP) and dimethylallyl diphosphate (DMAPP). Acts in the terminal step of the DOXP/MEP pathway for isoprenoid precursor biosynthesis. In Neisseria meningitidis serogroup A / serotype 4A (strain DSM 15465 / Z2491), this protein is 4-hydroxy-3-methylbut-2-enyl diphosphate reductase.